Reading from the N-terminus, the 89-residue chain is MSITAERKTALIKDYARGGTDTGSPEVQVAILTERIANLTGHFKTHTKDNHSRRGLLKLVSQRRSLLDYLKRKDEGRYRTLIERLGIRR.

It belongs to the universal ribosomal protein uS15 family. Part of the 30S ribosomal subunit. Forms a bridge to the 50S subunit in the 70S ribosome, contacting the 23S rRNA.

One of the primary rRNA binding proteins, it binds directly to 16S rRNA where it helps nucleate assembly of the platform of the 30S subunit by binding and bridging several RNA helices of the 16S rRNA. Its function is as follows. Forms an intersubunit bridge (bridge B4) with the 23S rRNA of the 50S subunit in the ribosome. This is Small ribosomal subunit protein uS15 from Methylobacterium sp. (strain 4-46).